The primary structure comprises 444 residues: Ribosome biogenesis protein YTM1 (444 aa).

Residues 8–89 are ubiquitin-like (UBL) domain; that stretch reads VKLRFFTREE…ETFLNVEYTR (82 aa). WD repeat units lie at residues 99-138, 140-178, 194-231, 269-309, 311-350, 357-397, and 408-444; these read SFDN…EKQY, GHSG…LKSI, GHKA…MTVI, SHSA…CVDT, TTSY…SSKI, GHKN…AMYT, and GVND…IFSN. The segment at 99–444 is sufficient for interaction with ERB1 and association with 66S pre-ribosomes; the sequence is SFDNEDWVSS…INKGDNIFSN (346 aa).

Belongs to the WD repeat WDR12/YTM1 family. In terms of assembly, component of the NOP7 complex, composed of ERB1, NOP7 and YTM1. The complex is held together by ERB1, which interacts with NOP7 via its N-terminal domain and with YTM1 via a high-affinity interaction between the seven-bladed beta-propeller domains of the 2 proteins. The NOP7 complex associates with the 66S pre-ribosome. Interacts (via UBL domain) with MDN1 (via VWFA/MIDAS domain).

The protein resides in the nucleus. Its subcellular location is the nucleolus. It is found in the nucleoplasm. In terms of biological role, component of the NOP7 complex, which is required for maturation of the 25S and 5.8S ribosomal RNAs and formation of the 60S ribosome. This is Ribosome biogenesis protein YTM1 from Kluyveromyces lactis (strain ATCC 8585 / CBS 2359 / DSM 70799 / NBRC 1267 / NRRL Y-1140 / WM37) (Yeast).